The primary structure comprises 102 residues: Large ribosomal subunit protein bL21 (102 aa).

This sequence belongs to the bacterial ribosomal protein bL21 family. In terms of assembly, part of the 50S ribosomal subunit. Contacts protein L20.

Its function is as follows. This protein binds to 23S rRNA in the presence of protein L20. In Bacillus velezensis (strain DSM 23117 / BGSC 10A6 / LMG 26770 / FZB42) (Bacillus amyloliquefaciens subsp. plantarum), this protein is Large ribosomal subunit protein bL21.